We begin with the raw amino-acid sequence, 910 residues long: Eukaryotic translation initiation factor 3 subunit C (910 aa).

Residues 1–21 (MSRFFANGSDSESESSEDEIQ) are disordered. The span at 11–20 (SESESSEDEI) shows a compositional bias: acidic residues. Phosphoserine is present on residues S34, S165, S176, and S185. The tract at residues 157 to 279 (FREAPDQESE…IRKRAEDDED (123 aa)) is disordered. The segment covering 162–186 (DQESEAEDEVVALESDGGDAGDDSD) has biased composition (acidic residues). Positions 188 to 207 (GVKPTEAAPKAVKTAPAKAA) are enriched in low complexity. Residues 209-235 (ADDDDSDDSIDWDSDSESETESSDDEN) show a composition bias toward acidic residues. Residues 240-268 (MRERFLKRTTEKEEKDDDKRKDKRKEQKI) show a composition bias toward basic and acidic residues. Positions 639–815 (FHMHINLELL…ETVVMHRSEP (177 aa)) constitute a PCI domain. Residues 847-910 (FFQRGNMGNR…QQQVQTIDEE (64 aa)) are disordered. The span at 862-874 (NRNQNNQGGNWLG) shows a compositional bias: low complexity. Residues 882-891 (RNRNQRGHHK) are compositionally biased toward basic residues. A compositionally biased stretch (low complexity) spans 895-910 (DRQQQQQQQVQTIDEE).

This sequence belongs to the eIF-3 subunit C family. Component of the eukaryotic translation initiation factor 3 (eIF-3) complex. The eIF-3 complex interacts with pix.

Its subcellular location is the cytoplasm. Component of the eukaryotic translation initiation factor 3 (eIF-3) complex, which is involved in protein synthesis of a specialized repertoire of mRNAs and, together with other initiation factors, stimulates binding of mRNA and methionyl-tRNAi to the 40S ribosome. The eIF-3 complex specifically targets and initiates translation of a subset of mRNAs involved in cell proliferation. The polypeptide is Eukaryotic translation initiation factor 3 subunit C (Drosophila erecta (Fruit fly)).